The sequence spans 359 residues: 5-formaminoimidazole-4-carboxamide-1-(beta)-D-ribofuranosyl 5'-monophosphate synthetase (359 aa).

Residues His27 and Ser94 each coordinate 5-amino-1-(5-phospho-beta-D-ribosyl)imidazole-4-carboxamide. The ATP-grasp domain occupies 116–340 (RRLLRWESER…FGEIVTMGRR (225 aa)). ATP contacts are provided by residues 146–208 (PEDI…TNFC) and Glu230. Asn258 is a binding site for 5-amino-1-(5-phospho-beta-D-ribosyl)imidazole-4-carboxamide. Residues Gln297 and Glu310 each contribute to the Mg(2+) site.

This sequence belongs to the phosphohexose mutase family. Requires Mg(2+) as cofactor. The cofactor is Mn(2+).

The catalysed reaction is 5-amino-1-(5-phospho-beta-D-ribosyl)imidazole-4-carboxamide + formate + ATP = 5-formamido-1-(5-phospho-D-ribosyl)imidazole-4-carboxamide + ADP + phosphate. It participates in purine metabolism; IMP biosynthesis via de novo pathway; 5-formamido-1-(5-phospho-D-ribosyl)imidazole-4-carboxamide from 5-amino-1-(5-phospho-D-ribosyl)imidazole-4-carboxamide (formate route): step 1/1. Functionally, catalyzes the ATP- and formate-dependent formylation of 5-aminoimidazole-4-carboxamide-1-beta-d-ribofuranosyl 5'-monophosphate (AICAR) to 5-formaminoimidazole-4-carboxamide-1-beta-d-ribofuranosyl 5'-monophosphate (FAICAR) in the absence of folates. This Methanopyrus kandleri (strain AV19 / DSM 6324 / JCM 9639 / NBRC 100938) protein is 5-formaminoimidazole-4-carboxamide-1-(beta)-D-ribofuranosyl 5'-monophosphate synthetase.